The primary structure comprises 289 residues: 3-methyl-2-oxobutanoate hydroxymethyltransferase (289 aa).

A compositionally biased stretch (polar residues) spans M1 to N15. Positions M1–M21 are disordered. Residues D67 and D106 each contribute to the Mg(2+) site. Residues D67–S68, D106, and K136 each bind 3-methyl-2-oxobutanoate. E138 contributes to the Mg(2+) binding site. The active-site Proton acceptor is E205.

Belongs to the PanB family. As to quaternary structure, homodecamer; pentamer of dimers. The cofactor is Mg(2+).

Its subcellular location is the cytoplasm. The enzyme catalyses 3-methyl-2-oxobutanoate + (6R)-5,10-methylene-5,6,7,8-tetrahydrofolate + H2O = 2-dehydropantoate + (6S)-5,6,7,8-tetrahydrofolate. The protein operates within cofactor biosynthesis; (R)-pantothenate biosynthesis; (R)-pantoate from 3-methyl-2-oxobutanoate: step 1/2. In terms of biological role, catalyzes the reversible reaction in which hydroxymethyl group from 5,10-methylenetetrahydrofolate is transferred onto alpha-ketoisovalerate to form ketopantoate. The chain is 3-methyl-2-oxobutanoate hydroxymethyltransferase from Erythrobacter litoralis (strain HTCC2594).